Here is a 329-residue protein sequence, read N- to C-terminus: Beta-ketoacyl-[acyl-carrier-protein] synthase III (329 aa).

Active-site residues include Cys-114 and His-255. Residues 256 to 260 (QANQR) form an ACP-binding region. Asn-285 is an active-site residue.

It belongs to the thiolase-like superfamily. FabH family. In terms of assembly, homodimer.

The protein localises to the cytoplasm. The catalysed reaction is malonyl-[ACP] + acetyl-CoA + H(+) = 3-oxobutanoyl-[ACP] + CO2 + CoA. It participates in lipid metabolism; fatty acid biosynthesis. Catalyzes the condensation reaction of fatty acid synthesis by the addition to an acyl acceptor of two carbons from malonyl-ACP. Catalyzes the first condensation reaction which initiates fatty acid synthesis and may therefore play a role in governing the total rate of fatty acid production. Possesses both acetoacetyl-ACP synthase and acetyl transacylase activities. Its substrate specificity determines the biosynthesis of branched-chain and/or straight-chain of fatty acids. The sequence is that of Beta-ketoacyl-[acyl-carrier-protein] synthase III from Trichodesmium erythraeum (strain IMS101).